Reading from the N-terminus, the 476-residue chain is Serine carboxypeptidase 2 (476 aa).

Residues 1–34 form the signal peptide; the sequence is MRTTTRRLPPAPAAAAVLLAALTCLLLRPAAVAA. Intrachain disulfides connect cysteine 97-cysteine 353, cysteine 254-cysteine 266, and cysteine 290-cysteine 320. 2 N-linked (GlcNAc...) asparagine glycosylation sites follow: asparagine 148 and asparagine 159. Serine 190 is an active-site residue. N-linked (GlcNAc...) asparagine glycosylation is present at asparagine 291. A propeptide spans 295 to 313 (linker peptide); that stretch reads SSSSSSLSRRRTRGRYPWL. Threonine 314 carries the blocked amino end (Thr) modification. 2 N-linked (GlcNAc...) asparagine glycosylation sites follow: asparagine 341 and asparagine 347. N-linked (GlcNAc...) asparagine; partial glycosylation occurs at asparagine 352. An O-linked (GalNAc...) threonine; in variant 351-AT-352 glycan is attached at asparagine 352. Active-site residues include aspartate 390 and histidine 443. Asparagine 472 carries an N-linked (GlcNAc...) asparagine glycan.

The protein belongs to the peptidase S10 family. Carboxypeptidase II is a dimer, where each monomer is composed of two chains linked by a disulfide bond.

The protein localises to the secreted. It carries out the reaction Preferential release of a C-terminal arginine or lysine residue.. May be involved in the degradation of small peptides (2-5 residues) or in the degradation of storage proteins in the embryo. The chain is Serine carboxypeptidase 2 (CBP2) from Hordeum vulgare (Barley).